A 170-amino-acid polypeptide reads, in one-letter code: Ribosome maturation factor RimM (170 aa).

A PRC barrel domain is found at 93–165 (PDEFHDHELI…RVVIDPPPGL (73 aa)).

This sequence belongs to the RimM family. Binds ribosomal protein uS19.

The protein localises to the cytoplasm. Its function is as follows. An accessory protein needed during the final step in the assembly of 30S ribosomal subunit, possibly for assembly of the head region. Essential for efficient processing of 16S rRNA. May be needed both before and after RbfA during the maturation of 16S rRNA. It has affinity for free ribosomal 30S subunits but not for 70S ribosomes. The protein is Ribosome maturation factor RimM of Thermobifida fusca (strain YX).